A 223-amino-acid chain; its full sequence is Carnitine transport permease protein OpuCD (223 aa).

The ABC transmembrane type-1 domain maps to 22–202 (FWRHFLMSAY…VMAILADVLL (181 aa)). Transmembrane regions (helical) follow at residues 27-47 (LMSAYGVIFAAIIAIPLGVYI), 63-83 (IIQTIPALAMLAVLMLIMGLG), 87-107 (VVLSLFLYSLLPILKNTYTGI), 148-168 (ALVIAIGVAAIGTFVGAGGLG), and 182-202 (AIILAGAIPTAVMAILADVLL).

It belongs to the binding-protein-dependent transport system permease family. In terms of assembly, the complex is composed of two ATP-binding proteins (OpuCA), two transmembrane proteins (OpuCB and OpuCD) and a solute-binding protein (OpuCC).

It localises to the cell membrane. Its function is as follows. Part of the ABC transporter complex OpuCABCD involved in carnitine uptake. Probably responsible for the translocation of the substrate across the membrane. Involved, with BetL and GbuABC, in osmoprotection and cryoprotection of Listeria. Can also mediate weak glycine betaine transport. The polypeptide is Carnitine transport permease protein OpuCD (opuCD) (Listeria monocytogenes serotype 1/2a (strain 10403S)).